The primary structure comprises 233 residues: Thrombin-like enzyme elegaxobin-2 (233 aa).

The Peptidase S1 domain occupies 1 to 224 (VIGGDECNIN…HLDWIKGIIA (224 aa)). Disulfide bonds link Cys7/Cys138, Cys25/Cys41, Cys73/Cys231, Cys117/Cys185, Cys149/Cys164, and Cys175/Cys200. His40 (charge relay system) is an active-site residue. Asn78 carries N-linked (GlcNAc...) asparagine glycosylation. Asp85 serves as the catalytic Charge relay system. Catalysis depends on Ser179, which acts as the Charge relay system.

This sequence belongs to the peptidase S1 family. Snake venom subfamily. Monomer. Expressed by the venom gland.

It localises to the secreted. Thrombin-like snake venom serine protease that clots rabbit fibrinogen. Only the beta chain of fibrinogen (FGB) is cleaved, releasing fibrinopeptide B. Human and bovine fibrinogen are unaffected. Also cleaves Met-Lys and Arg-Ser bonds in heat-denatured bovine plasma kininogen to release Lys-bradykinin. This chain is Thrombin-like enzyme elegaxobin-2, found in Protobothrops elegans (Elegant pitviper).